Consider the following 63-residue polypeptide: ATP synthase subunit epsilon, mitochondrial (63 aa).

As to quaternary structure, F-type ATP synthases have 2 components, the catalytic core F(1) and the membrane-embedded component F(0), linked together by a central stalk and a peripheral stalk. The central stalk, also called rotor shaft, is often seen as part of F(1). The peripheral stalk is seen as part of F(0). F(0) contains the membrane channel next to the rotor. F-type ATP synthases form dimers but each monomer functions independently in ATP generation. The dimer consists of 18 different polypeptides: ATP1 (subunit alpha, part of F(1), 3 molecules per monomer), ATP2 (subunit beta, part of F(1), 3 molecules per monomer), ATP3 (subunit gamma, part of the central stalk), ATP4 (subunit b, part of the peripheral stalk), ATP5/OSCP (subunit 5/OSCP, part of the peripheral stalk), ATP6 (subunit a, part of the peripheral stalk), ATP7 (subunit d, part of the peripheral stalk), ATP8 (subunit 8, part of the peripheral stalk), OLI1 (subunit c, part of the rotor, 10 molecules per monomer), ATP14 (subunit h, part of the peripheral stalk), ATP15 (subunit epsilon, part of the central stalk), ATP16 (subunit delta, part of the central stalk), ATP17 (subunit f, part of the peripheral stalk), ATP18 (subunit i/j, part of the peripheral stalk). Dimer-specific subunits are ATP19 (subunit k, at interface between monomers), ATP20 (subunit g, at interface between monomers), TIM11 (subunit e, at interface between monomers). Also contains subunit L.

It localises to the mitochondrion inner membrane. Functionally, mitochondrial membrane ATP synthase (F(1)F(0) ATP synthase or Complex V) produces ATP from ADP in the presence of a proton gradient across the membrane which is generated by electron transport complexes of the respiratory chain. F-type ATP synthases consist of two structural domains, F(1) - containing the extramembraneous catalytic core, and F(0) - containing the membrane proton channel, linked together by a central stalk and a peripheral stalk. During catalysis, ATP synthesis in the catalytic domain of F(1) is coupled via a rotary mechanism of the central stalk subunits to proton translocation. Part of the complex F(1) domain and the central stalk which is part of the complex rotary element. Rotation of the central stalk against the surrounding alpha/ATP1(3)beta/ATP2(3) subunits leads to hydrolysis of ATP in three separate catalytic sites on the beta/ATP2 subunits. The protein is ATP synthase subunit epsilon, mitochondrial of Pichia angusta (Yeast).